A 134-amino-acid chain; its full sequence is Thioredoxin H2-2 (134 aa).

Residues 1 to 20 (MGSFFSTMFTPPPAADDGGD) form a disordered region. The 128-residue stretch at 3 to 130 (SFFSTMFTPP…LERKVNMFIS (128 aa)) folds into the Thioredoxin domain. Catalysis depends on nucleophile residues Cys56 and Cys59. Cysteines 56 and 59 form a disulfide.

The protein belongs to the thioredoxin family. Plant H-type subfamily.

The protein resides in the cytoplasm. Its function is as follows. Probable thiol-disulfide oxidoreductase that may be involved in the redox regulation of a number of cytosolic enzymes. The polypeptide is Thioredoxin H2-2 (Oryza sativa subsp. japonica (Rice)).